The chain runs to 757 residues: Polyribonucleotide nucleotidyltransferase (757 aa).

2 residues coordinate Mg(2+): Asp525 and Asp531. The region spanning 591–650 (PRVISVNIPVDKIGELIGPKGKTINAIQDETGADISIEEDGTVYIGAVDGPSADAARAQV) is the KH domain. Residues 662-734 (GESFLGTVVK…DRGKLSLAPV (73 aa)) enclose the S1 motif domain. Residues 737–757 (ETADQEGRDAASHGSEAPAEG) are disordered.

This sequence belongs to the polyribonucleotide nucleotidyltransferase family. Requires Mg(2+) as cofactor.

It is found in the cytoplasm. The catalysed reaction is RNA(n+1) + phosphate = RNA(n) + a ribonucleoside 5'-diphosphate. In terms of biological role, involved in mRNA degradation. Catalyzes the phosphorolysis of single-stranded polyribonucleotides processively in the 3'- to 5'-direction. This Clavibacter michiganensis subsp. michiganensis (strain NCPPB 382) protein is Polyribonucleotide nucleotidyltransferase.